The primary structure comprises 119 residues: MFKKVDKKASREKRHLRVRKKVFGTAERPRLSVFKSEKNIYAQVIDDINGVTLVAASSLEKDFAAKGGNKEGAKLVGELVAKKAIEKGIDVVVFDRGGYIYHGRIQELAQAAREAGLKF.

This sequence belongs to the universal ribosomal protein uL18 family. In terms of assembly, part of the 50S ribosomal subunit; part of the 5S rRNA/L5/L18/L25 subcomplex. Contacts the 5S and 23S rRNAs.

Its function is as follows. This is one of the proteins that bind and probably mediate the attachment of the 5S RNA into the large ribosomal subunit, where it forms part of the central protuberance. This Clostridium beijerinckii (strain ATCC 51743 / NCIMB 8052) (Clostridium acetobutylicum) protein is Large ribosomal subunit protein uL18.